A 410-amino-acid polypeptide reads, in one-letter code: Dipeptidase ataJ (410 aa).

The Zn(2+) site is built by His27, Asp29, and Glu138. His165 contributes to the substrate binding site. Residues Thr180–Arg200 are disordered. Positions 258 and 318 each coordinate substrate.

It belongs to the metallo-dependent hydrolases superfamily. Peptidase M19 family. Requires Zn(2+) as cofactor.

The catalysed reaction is an L-aminoacyl-L-amino acid + H2O = 2 an L-alpha-amino acid. It participates in mycotoxin biosynthesis. Its function is as follows. Dipeptidase; part of the gene cluster that mediates the biosynthesis of acetylaranotin, a member of the epipolythiodioxopiperazine (ETP) class of toxins characterized by a disulfide-bridged cyclic dipeptide. The first step of acetylaranotin biosynthesis is performed by the NRPS ataP which produces diketopiperazine cyclo-L-Phe-L-Phe via the condensation of 2 phenylalanines (L-Phe). The ataC domain of ataTC then catalyzes the formation of bishydroxylation of cyclo-L-Phe-L-Phe. The glutathione S-transferase domain ataG in ataIMG further catalyzes the conjugation of two glutathiones to the bishydroxylated intermediate. Next, the dipeptidase ataJ removes the Glu residues. The following step is performed by the carbon sulfur lyase domain ataI of ataIMG which may convert the bis-cysteinyl adduct to yield an epidithiol intermediate. The ataT domain from ataTC then catalyzes the oxidation of the free dithiols, followed by a cyclization step catalyzed by the cytochrome P450 ataF. AtaF probably acts as an epoxidase to promote a dual epoxidation formation at C8 and C9 along with C8' and C9', followed by the spontaneous nucleophilic attack of the amide nitrogens N10 and N10' to yield an intermediate with the pyrrolidine partial structure. The final steps of acetylaranotin biosynthesis involve the acetylation and ring rearrangement of an epitetrathiodiketopiperazine intermediate to produce acetylaranotin. AtaH probably catalyzes the acetylation of epitetrathiodiketopiperazine to produce a diacetate and ataY is responsible for the formation of the dihydrooxepin moiety that converts the diacetate intermediate to acetylaranotin via acetylapoaranotin. Both enzymes could function independently in the absence of the other. The acetylaranotin bis-thiomethyltransferase ataS located outside of acetylaranotin gene cluster is the main thiomethyltransferase responsible for converting acetylaranotin and its related intermediates to their methylated forms. The sequence is that of Dipeptidase ataJ from Aspergillus terreus (strain NIH 2624 / FGSC A1156).